A 384-amino-acid chain; its full sequence is Deoxyguanosinetriphosphate triphosphohydrolase-like protein (384 aa).

In terms of domain architecture, HD spans arginine 63–isoleucine 199.

It belongs to the dGTPase family. Type 2 subfamily.

The polypeptide is Deoxyguanosinetriphosphate triphosphohydrolase-like protein (Rickettsia typhi (strain ATCC VR-144 / Wilmington)).